We begin with the raw amino-acid sequence, 323 residues long: Acetyl-coenzyme A carboxylase carboxyl transferase subunit alpha (323 aa).

The 255-residue stretch at 39-293 (RLSKKSQQLT…RRALGDSLRQ (255 aa)) folds into the CoA carboxyltransferase C-terminal domain.

It belongs to the AccA family. As to quaternary structure, acetyl-CoA carboxylase is a heterohexamer composed of biotin carboxyl carrier protein (AccB), biotin carboxylase (AccC) and two subunits each of ACCase subunit alpha (AccA) and ACCase subunit beta (AccD).

It is found in the cytoplasm. It catalyses the reaction N(6)-carboxybiotinyl-L-lysyl-[protein] + acetyl-CoA = N(6)-biotinyl-L-lysyl-[protein] + malonyl-CoA. Its pathway is lipid metabolism; malonyl-CoA biosynthesis; malonyl-CoA from acetyl-CoA: step 1/1. In terms of biological role, component of the acetyl coenzyme A carboxylase (ACC) complex. First, biotin carboxylase catalyzes the carboxylation of biotin on its carrier protein (BCCP) and then the CO(2) group is transferred by the carboxyltransferase to acetyl-CoA to form malonyl-CoA. The polypeptide is Acetyl-coenzyme A carboxylase carboxyl transferase subunit alpha (Burkholderia pseudomallei (strain 1106a)).